Here is a 413-residue protein sequence, read N- to C-terminus: Serine hydroxymethyltransferase (413 aa).

(6S)-5,6,7,8-tetrahydrofolate contacts are provided by residues leucine 119 and 123-125 (GHL). Lysine 228 carries the post-translational modification N6-(pyridoxal phosphate)lysine. 351-353 (SPF) is a binding site for (6S)-5,6,7,8-tetrahydrofolate.

It belongs to the SHMT family. As to quaternary structure, homodimer. Pyridoxal 5'-phosphate serves as cofactor.

It is found in the cytoplasm. It catalyses the reaction (6R)-5,10-methylene-5,6,7,8-tetrahydrofolate + glycine + H2O = (6S)-5,6,7,8-tetrahydrofolate + L-serine. It functions in the pathway one-carbon metabolism; tetrahydrofolate interconversion. It participates in amino-acid biosynthesis; glycine biosynthesis; glycine from L-serine: step 1/1. Functionally, catalyzes the reversible interconversion of serine and glycine with tetrahydrofolate (THF) serving as the one-carbon carrier. This reaction serves as the major source of one-carbon groups required for the biosynthesis of purines, thymidylate, methionine, and other important biomolecules. Also exhibits THF-independent aldolase activity toward beta-hydroxyamino acids, producing glycine and aldehydes, via a retro-aldol mechanism. This Clostridium botulinum (strain ATCC 19397 / Type A) protein is Serine hydroxymethyltransferase.